Here is a 488-residue protein sequence, read N- to C-terminus: Glutamyl-tRNA(Gln) amidotransferase subunit A (488 aa).

Residues Lys-77 and Ser-152 each act as charge relay system in the active site. Ser-176 acts as the Acyl-ester intermediate in catalysis.

Belongs to the amidase family. GatA subfamily. As to quaternary structure, heterotrimer of A, B and C subunits.

The enzyme catalyses L-glutamyl-tRNA(Gln) + L-glutamine + ATP + H2O = L-glutaminyl-tRNA(Gln) + L-glutamate + ADP + phosphate + H(+). In terms of biological role, allows the formation of correctly charged Gln-tRNA(Gln) through the transamidation of misacylated Glu-tRNA(Gln) in organisms which lack glutaminyl-tRNA synthetase. The reaction takes place in the presence of glutamine and ATP through an activated gamma-phospho-Glu-tRNA(Gln). The polypeptide is Glutamyl-tRNA(Gln) amidotransferase subunit A (Streptococcus equi subsp. zooepidemicus (strain H70)).